The primary structure comprises 257 residues: Sulfur carrier protein FdhD (257 aa).

The Cysteine persulfide intermediate role is filled by C105.

Belongs to the FdhD family.

The protein resides in the cytoplasm. Functionally, required for formate dehydrogenase (FDH) activity. Acts as a sulfur carrier protein that transfers sulfur from IscS to the molybdenum cofactor prior to its insertion into FDH. The polypeptide is Sulfur carrier protein FdhD (Saccharolobus solfataricus (strain ATCC 35092 / DSM 1617 / JCM 11322 / P2) (Sulfolobus solfataricus)).